Here is a 1028-residue protein sequence, read N- to C-terminus: Contactin-3 (1028 aa).

The N-terminal stretch at 1–19 (MMFPWKQLILLSFIGCLGG) is a signal peptide. Ig-like C2-type domains are found at residues 26 to 117 (PVFI…AKLQ), 122 to 208 (ENFK…ARVL), 227 to 313 (PKIE…GRLT), 318 to 402 (PHWV…AELK), 408 to 497 (PDFS…LVVT), and 499 to 593 (PTRI…ADLI). Disulfide bonds link Cys-50/Cys-100, Cys-144/Cys-196, Cys-249/Cys-297, Cys-339/Cys-386, and Cys-431/Cys-479. 2 N-linked (GlcNAc...) asparagine glycosylation sites follow: Asn-65 and Asn-193. N-linked (GlcNAc...) asparagine glycans are attached at residues Asn-375, Asn-468, and Asn-489. Cys-521 and Cys-577 are disulfide-bonded. Fibronectin type-III domains follow at residues 600 to 698 (PPEN…TEEA), 703 to 800 (PPSE…SAEE), 805 to 901 (APSQ…TKKT), and 902 to 998 (PPSQ…TSMD). A disordered region spans residues 684-713 (GEPSLPSEKVRTEEAVPEVPPSEVNGGGGS). Asn-765, Asn-860, Asn-895, Asn-913, Asn-931, and Asn-956 each carry an N-linked (GlcNAc...) asparagine glycan. A lipid anchor (GPI-anchor amidated serine) is attached at Ser-1002. Residues 1003–1028 (TSAISNVHPMSSYMPIVLFLIVYVLW) constitute a propeptide, removed in mature form.

This sequence belongs to the immunoglobulin superfamily. Contactin family. Interacts with PTPRG. As to expression, in brain, it is expressed in frontal lobe, occipital lobe, cerebellum and amygdala.

It localises to the cell membrane. Contactins mediate cell surface interactions during nervous system development. Has some neurite outgrowth-promoting activity. The polypeptide is Contactin-3 (CNTN3) (Homo sapiens (Human)).